A 589-amino-acid chain; its full sequence is UvrABC system protein C (589 aa).

Residues 14-91 (HKPGCYLWKD…IAKYKPKYNM (78 aa)) enclose the GIY-YIG domain.

The protein belongs to the UvrC family. In terms of assembly, interacts with UvrB in an incision complex.

It is found in the cytoplasm. The UvrABC repair system catalyzes the recognition and processing of DNA lesions. UvrC both incises the 5' and 3' sides of the lesion. The N-terminal half is responsible for the 3' incision and the C-terminal half is responsible for the 5' incision. This chain is UvrABC system protein C, found in Malacoplasma penetrans (strain HF-2) (Mycoplasma penetrans).